The following is a 129-amino-acid chain: M-zodatoxin-Lt8c (129 aa).

Residues 1–20 (MKYFVVALALVAAFACIAES) form the signal peptide. A propeptide spanning residues 21–60 (KPAESEHELAEVEEENELADLEDAVWLEHLADLSDLEEAR) is cleaved from the precursor. Residues 57–60 (EEAR) carry the Processing quadruplet motif motif.

Post-translationally, cleavage of the propeptide depends on the processing quadruplet motif (XXXR, with at least one of X being E). Expressed by the venom gland.

It localises to the secreted. Its function is as follows. Insecticidal, cytolytic and antimicrobial peptide. Forms voltage-dependent, ion-permeable channels in membranes. At high concentration causes cell membrane lysis. This is M-zodatoxin-Lt8c (cit 1-3) from Lachesana tarabaevi (Spider).